We begin with the raw amino-acid sequence, 584 residues long: MKRHVASLLAQALKAMREAGELPADLELPEVQVERARDRAHGDYAANTAMVLAKPARQKPRDLAETIRSRLPASEAIAGVEIAGPGFLNFTLTTAARQESVRVALRQGAEYGRSDVGAGHRVHIEFVSANPTGPLHVGHGRGAAFGDALASVLEAAGYHVHREYYVNDAGRQMDILAASLWLRYLEAAGEPVSFPNKGYQGDYIVTHARELFEADGREHVRTAAELGAGLPAEDDDPEGYLDALVARSRELLGETAYRRVLDFALEAILGDIRADLDAFGVHYHRYFSERQLVDQGRIEHALERLDQAGYTYRADGALWFQASVFGDDKDRVLRRDNGLTTYFAADVAYHLDKIERGFDTLVNVWGADHHGYVPRVQAALKALGVDAERLDVRLVQFAILYRGGEKLPMSTRSGEFVTLRELRDEVGKDAARFFYVMRRSEQHMDFDLDLAKSESADNPVYYCQYAHARICSVFRQLEERGLACRVTPDEAALERLDAEHEAILLDLLGRYPEVIESAALAREPHQVAQYLRELAAAFHTYYNAVPFIIDDEALRDARLTLVQATRQVLANGLGLLGVDAPQSM.

The 'HIGH' region signature appears at 129 to 139; it reads ANPTGPLHVGH.

It belongs to the class-I aminoacyl-tRNA synthetase family. In terms of assembly, monomer.

It localises to the cytoplasm. It carries out the reaction tRNA(Arg) + L-arginine + ATP = L-arginyl-tRNA(Arg) + AMP + diphosphate. The polypeptide is Arginine--tRNA ligase (Halorhodospira halophila (strain DSM 244 / SL1) (Ectothiorhodospira halophila (strain DSM 244 / SL1))).